The following is a 332-amino-acid chain: GTP 3',8-cyclase (332 aa).

The Radical SAM core domain occupies 9–234 (TFGRRISYLR…DSDHRTGGPS (226 aa)). R18 serves as a coordination point for GTP. Residues C25 and C29 each contribute to the [4Fe-4S] cluster site. Position 31 (Y31) interacts with S-adenosyl-L-methionine. C32 contributes to the [4Fe-4S] cluster binding site. R67 contributes to the GTP binding site. G71 contributes to the S-adenosyl-L-methionine binding site. T100 contacts GTP. S-adenosyl-L-methionine is bound at residue S124. K160 contacts GTP. M194 contributes to the S-adenosyl-L-methionine binding site. Residues C257 and C260 each contribute to the [4Fe-4S] cluster site. 262 to 264 (RVR) is a binding site for GTP. Position 274 (C274) interacts with [4Fe-4S] cluster.

The protein belongs to the radical SAM superfamily. MoaA family. Monomer and homodimer. [4Fe-4S] cluster is required as a cofactor.

The enzyme catalyses GTP + AH2 + S-adenosyl-L-methionine = (8S)-3',8-cyclo-7,8-dihydroguanosine 5'-triphosphate + 5'-deoxyadenosine + L-methionine + A + H(+). The protein operates within cofactor biosynthesis; molybdopterin biosynthesis. Its function is as follows. Catalyzes the cyclization of GTP to (8S)-3',8-cyclo-7,8-dihydroguanosine 5'-triphosphate. In Erythrobacter litoralis (strain HTCC2594), this protein is GTP 3',8-cyclase.